A 250-amino-acid chain; its full sequence is tRNA (guanine-N(1)-)-methyltransferase (250 aa).

S-adenosyl-L-methionine contacts are provided by residues G116 and 136–141 (IGDYVL).

Belongs to the RNA methyltransferase TrmD family. Homodimer.

The protein localises to the cytoplasm. The enzyme catalyses guanosine(37) in tRNA + S-adenosyl-L-methionine = N(1)-methylguanosine(37) in tRNA + S-adenosyl-L-homocysteine + H(+). Functionally, specifically methylates guanosine-37 in various tRNAs. This is tRNA (guanine-N(1)-)-methyltransferase from Pseudomonas syringae pv. tomato (strain ATCC BAA-871 / DC3000).